A 339-amino-acid chain; its full sequence is DNA-directed RNA polymerase subunit alpha (339 aa).

The segment at 1-233 (MVREEVAGST…DLFLPFLHAE (233 aa)) is alpha N-terminal domain (alpha-NTD). The alpha C-terminal domain (alpha-CTD) stretch occupies residues 264 to 339 (KKGIPLNCIF…IDLLKNKLSF (76 aa)).

Belongs to the RNA polymerase alpha chain family. In plastids the minimal PEP RNA polymerase catalytic core is composed of four subunits: alpha, beta, beta', and beta''. When a (nuclear-encoded) sigma factor is associated with the core the holoenzyme is formed, which can initiate transcription.

It is found in the plastid. Its subcellular location is the chloroplast. The enzyme catalyses RNA(n) + a ribonucleoside 5'-triphosphate = RNA(n+1) + diphosphate. In terms of biological role, DNA-dependent RNA polymerase catalyzes the transcription of DNA into RNA using the four ribonucleoside triphosphates as substrates. This is DNA-directed RNA polymerase subunit alpha from Thinopyrum elongatum (Tall wheatgrass).